A 429-amino-acid chain; its full sequence is Dihydroorotase (429 aa).

2 residues coordinate Zn(2+): H61 and H63. Residues 63–65 (HYR) and N95 each bind substrate. Zn(2+) contacts are provided by D153, H180, and H233. Position 279 (N279) interacts with substrate. Position 306 (D306) interacts with Zn(2+). Residue D306 is part of the active site. Substrate-binding positions include H310 and 324 to 325 (FG).

It belongs to the metallo-dependent hydrolases superfamily. DHOase family. Class I DHOase subfamily. The cofactor is Zn(2+).

The enzyme catalyses (S)-dihydroorotate + H2O = N-carbamoyl-L-aspartate + H(+). The protein operates within pyrimidine metabolism; UMP biosynthesis via de novo pathway; (S)-dihydroorotate from bicarbonate: step 3/3. Its function is as follows. Catalyzes the reversible cyclization of carbamoyl aspartate to dihydroorotate. This chain is Dihydroorotase, found in Ligilactobacillus salivarius (strain UCC118) (Lactobacillus salivarius).